The following is a 557-amino-acid chain: Protein Red (557 aa).

Residues 1–90 form a disordered region; it reads MPERDSEPFS…YAKLRQQEIE (90 aa). A compositionally biased stretch (basic and acidic residues) spans 16–25; the sequence is DGHDVDDPHS. A compositionally biased stretch (low complexity) spans 42 to 53; sequence TPRAAPTSAPPS. Residues K98 and K137 each carry the N6-acetyllysine modification. K151 is covalently cross-linked (Glycyl lysine isopeptide (Lys-Gly) (interchain with G-Cter in SUMO2)). Positions 181–205 are disordered; the sequence is KEKEEEELMEKPQKETKKDEDPENK. A Phosphoserine modification is found at S287. A compositionally biased stretch (basic residues) spans 294-303; that stretch reads RNKKLKKKDK. The segment at 294–402 is disordered; it reads RNKKLKKKDK…PMDVDKGPGS (109 aa). A compositionally biased stretch (basic and acidic residues) spans 304–313; sequence GKLEEKKPPE. Glycyl lysine isopeptide (Lys-Gly) (interchain with G-Cter in SUMO2) cross-links involve residues K310 and K331. Residues 332–398 are compositionally biased toward basic and acidic residues; sequence TPRDKERERY…VDDEPMDVDK (67 aa). Repeat copies occupy residues 342 to 343, 344 to 345, 346 to 347, 348 to 349, 350 to 351, 352 to 353, 354 to 355, 356 to 357, 358 to 359, 360 to 361, 362 to 363, 364 to 365, 366 to 367, 368 to 369, 370 to 371, 372 to 373, and 374 to 375. The segment at 342 to 375 is 17 X 2 AA tandem repeats of R-[ED]; sequence RERERDRERDRDRERDRERDRERERERDRERERE. Glycyl lysine isopeptide (Lys-Gly) (interchain with G-Cter in SUMO2) cross-links involve residues K386, K388, K404, and K408. S417 and S460 each carry phosphoserine. The residue at position 485 (T485) is a Phosphothreonine. Glycyl lysine isopeptide (Lys-Gly) (interchain with G-Cter in SUMO2) cross-links involve residues K496, K501, and K509. S536 is subject to Phosphoserine. Glycyl lysine isopeptide (Lys-Gly) (interchain with G-Cter in SUMO2) cross-links involve residues K541, K543, and K553.

Belongs to the RED family. In terms of assembly, component of the spliceosome B complex. Interacts with SMU1. Interacts with MAD1L1. May interact with DHX15. In terms of tissue distribution, ubiquitous.

The protein resides in the nucleus. It localises to the nucleoplasm. It is found in the chromosome. The protein localises to the cytoplasm. Its subcellular location is the cytoskeleton. The protein resides in the spindle pole. Functionally, involved in pre-mRNA splicing as a component of the spliceosome. Auxiliary spliceosomal protein that regulates selection of alternative splice sites in a small set of target pre-mRNA species. Required for normal mitotic cell cycle progression. Recruits MAD1L1 and MAD2L1 to kinetochores, and is required to trigger the spindle assembly checkpoint. Required for normal accumulation of SMU1. This Mus musculus (Mouse) protein is Protein Red (Ik).